An 801-amino-acid polypeptide reads, in one-letter code: Fibroblast growth factor receptor 3 (801 aa).

The signal sequence occupies residues 1–20; sequence MVVPACVLVFCVAVVAGATS. At 21-369 the chain is on the extracellular side; that stretch reads EPPGPEQRVV…TDEAGSVYAG (349 aa). In terms of domain architecture, Ig-like C2-type 1 spans 22–124; the sequence is PPGPEQRVVR…VLCHFSVRVT (103 aa). Cysteine 59 and cysteine 107 are disulfide-bonded. An N-linked (GlcNAc...) asparagine glycan is attached at asparagine 96. Positions 125–146 are disordered; it reads DAPSSGDDEDGEDVAEDTGAPY. Positions 130-140 are enriched in acidic residues; sequence GDDEDGEDVAE. Ig-like C2-type domains follow at residues 145 to 238 and 247 to 349; these read PYWT…YTLD and PILQ…AWLV. A disulfide bond links cysteine 170 and cysteine 222. N-linked (GlcNAc...) asparagine glycosylation is found at asparagine 219, asparagine 256, asparagine 288, asparagine 309, and asparagine 322. Cysteine 269 and cysteine 333 form a disulfide bridge. Residues 370–390 form a helical membrane-spanning segment; it reads VLSYGVVFFLFILVVAAVILC. Topologically, residues 391 to 801 are cytoplasmic; it reads RLRSPPKKGL…GPPSNGGPRT (411 aa). Phosphoserine is present on residues serine 438 and serine 439. Residues 466-756 form the Protein kinase domain; that stretch reads LTLGKPLGEG…LTVTSTDEYL (291 aa). ATP contacts are provided by residues 472–480 and lysine 502; that span reads LGEGCFGQV. Catalysis depends on aspartate 611, which acts as the Proton acceptor. Phosphotyrosine; by autocatalysis is present on residues tyrosine 641, tyrosine 642, tyrosine 719, and tyrosine 755. Positions 762–801 are disordered; that stretch reads FEQYSPGGQDTPSSSSSGDDSVFTHDLLPPGPPSNGGPRT. The span at 766–782 shows a compositional bias: low complexity; the sequence is SPGGQDTPSSSSSGDDS. Positions 790 to 801 are enriched in pro residues; sequence PPGPPSNGGPRT.

This sequence belongs to the protein kinase superfamily. Tyr protein kinase family. Fibroblast growth factor receptor subfamily. Monomer. Homodimer after ligand binding. Interacts with FGF1, FGF2, FGF4, FGF6; FGF8, FGF9, FGF10, FGF17, FGF18, FGF19, FGF20 and FGF23 (in vitro). Interacts with KLB. Affinity for fibroblast growth factors (FGFs) is increased by heparan sulfate glycosaminoglycans that function as coreceptors. Likewise, KLB increases the affinity for FGF19 and FGF21. Interacts with PIK3R1, PLCG1, SOCS1 and SOCS3. Autophosphorylated. Binding of FGF family members together with heparan sulfate proteoglycan or heparin promotes receptor dimerization and autophosphorylation on tyrosine residues. Autophosphorylation occurs in trans between the two FGFR molecules present in the dimer. Phosphorylation at Tyr-719 is essential for stimulation of cell proliferation and activation of PIK3R1, STAT1 and MAP kinase signaling. Phosphorylation at Tyr-755 is required for interaction with PIK3R1 and PLCG1. In terms of processing, ubiquitinated. Is rapidly ubiquitinated after ligand binding and autophosphorylation, leading to receptor internalization and degradation. Subject to both proteasomal and lysosomal degradation. Post-translationally, N-glycosylated in the endoplasmic reticulum. The N-glycan chains undergo further maturation to an Endo H-resistant form in the Golgi apparatus. In terms of tissue distribution, in embryo, expressed in heart, lung, kidney, skin, head and liver but not in muscle. In adult, highest levels in brain. Also expressed in liver, lung, kidney, testis, ovary and uterus. Very low levels in heart, thymus, spleen and muscle.

It is found in the cell membrane. The protein resides in the cytoplasmic vesicle. The protein localises to the endoplasmic reticulum. The enzyme catalyses L-tyrosyl-[protein] + ATP = O-phospho-L-tyrosyl-[protein] + ADP + H(+). With respect to regulation, present in an inactive conformation in the absence of bound ligand. Ligand binding leads to dimerization and activation by autophosphorylation on tyrosine residues. Functionally, tyrosine-protein kinase that acts as a cell-surface receptor for fibroblast growth factors and plays an essential role in the regulation of cell proliferation, differentiation and apoptosis. Plays an essential role in the regulation of chondrocyte differentiation, proliferation and apoptosis, and is required for normal skeleton development. Regulates both osteogenesis and postnatal bone mineralization by osteoblasts. Promotes apoptosis in chondrocytes, but can also promote cancer cell proliferation. Required for normal development of the inner ear. Phosphorylates PLCG1, CBL and FRS2. Ligand binding leads to the activation of several signaling cascades. Activation of PLCG1 leads to the production of the cellular signaling molecules diacylglycerol and inositol 1,4,5-trisphosphate. Phosphorylation of FRS2 triggers recruitment of GRB2, GAB1, PIK3R1 and SOS1, and mediates activation of RAS, MAPK1/ERK2, MAPK3/ERK1 and the MAP kinase signaling pathway, as well as of the AKT1 signaling pathway. Plays a role in the regulation of vitamin D metabolism. Mutations that lead to constitutive kinase activation or impair normal FGFR3 maturation, internalization and degradation lead to aberrant signaling. Over-expressed or constitutively activated FGFR3 promotes activation of STAT1, STAT5A and STAT5B. Plays a role in postnatal lung development. In Mus musculus (Mouse), this protein is Fibroblast growth factor receptor 3 (Fgfr3).